The primary structure comprises 407 residues: Tyrosine--tRNA ligase (407 aa).

Residue tyrosine 36 participates in L-tyrosine binding. A 'HIGH' region motif is present at residues 41 to 50 (PTADSLHIGH). L-tyrosine is bound by residues tyrosine 169 and glutamine 173. Positions 229-233 (KMGKT) match the 'KMSKS' region motif. Position 232 (lysine 232) interacts with ATP. Residues 341 to 407 (KGILDILVET…KKSYNRIVIE (67 aa)) enclose the S4 RNA-binding domain.

It belongs to the class-I aminoacyl-tRNA synthetase family. TyrS type 1 subfamily. Homodimer.

Its subcellular location is the cytoplasm. It carries out the reaction tRNA(Tyr) + L-tyrosine + ATP = L-tyrosyl-tRNA(Tyr) + AMP + diphosphate + H(+). Its function is as follows. Catalyzes the attachment of tyrosine to tRNA(Tyr) in a two-step reaction: tyrosine is first activated by ATP to form Tyr-AMP and then transferred to the acceptor end of tRNA(Tyr). In Clostridium tetani (strain Massachusetts / E88), this protein is Tyrosine--tRNA ligase.